A 102-amino-acid polypeptide reads, in one-letter code: Small ribosomal subunit protein uS10 (102 aa).

The protein belongs to the universal ribosomal protein uS10 family. As to quaternary structure, part of the 30S ribosomal subunit.

Its function is as follows. Involved in the binding of tRNA to the ribosomes. The sequence is that of Small ribosomal subunit protein uS10 from Rhodospirillum rubrum (strain ATCC 11170 / ATH 1.1.1 / DSM 467 / LMG 4362 / NCIMB 8255 / S1).